A 216-amino-acid polypeptide reads, in one-letter code: HTH-type transcriptional regulator EthR (216 aa).

Over residues 1-10 (MTTSAASQAS) the composition is skewed to polar residues. The interval 1-24 (MTTSAASQASLPRGRRTARPSGDD) is disordered. Positions 23–83 (DDRELAILAT…TLLDRVVNQA (61 aa)) constitute an HTH tetR-type domain. A DNA-binding region (H-T-H motif) is located at residues 46 to 65 (SVDDLAKGAGISRPTFYFYF).

Homodimer.

Functionally, involved in the repression of the monooxygenase EthA which is responsible of the formation of the active metabolite of ethionamide (ETH). This is HTH-type transcriptional regulator EthR (ethR) from Mycobacterium bovis (strain ATCC BAA-935 / AF2122/97).